Here is a 466-residue protein sequence, read N- to C-terminus: 3-isopropylmalate dehydratase large subunit (466 aa).

3 residues coordinate [4Fe-4S] cluster: Cys-347, Cys-407, and Cys-410.

This sequence belongs to the aconitase/IPM isomerase family. LeuC type 1 subfamily. Heterodimer of LeuC and LeuD. Requires [4Fe-4S] cluster as cofactor.

It catalyses the reaction (2R,3S)-3-isopropylmalate = (2S)-2-isopropylmalate. It functions in the pathway amino-acid biosynthesis; L-leucine biosynthesis; L-leucine from 3-methyl-2-oxobutanoate: step 2/4. Functionally, catalyzes the isomerization between 2-isopropylmalate and 3-isopropylmalate, via the formation of 2-isopropylmaleate. The protein is 3-isopropylmalate dehydratase large subunit of Shigella flexneri.